The primary structure comprises 309 residues: SERTA domain-containing protein 2 (309 aa).

Disordered stretches follow at residues 1–30, 79–114, and 175–220; these read MLGK…GPSR, EGSL…CDLG, and PTST…MDSL. The segment covering 8 to 18 has biased composition (basic and acidic residues); that stretch reads RKFDEHEDGLE. An SERTA domain is found at 33–80; sequence YTLQRQTIFNISLMKLYNHRPLTEPSLQKTVLINNMLRRIQEELKQEG. Composition is skewed to low complexity over residues 89-99 and 175-189; these read SSQPSNSLSDS and PTST…AAPE. Basic and acidic residues predominate over residues 204 to 216; it reads EGPEEGRTDDSRF. The segment at 230-306 is required for transactivation activity; sequence TGFLTDLTLD…TELDHIMEVL (77 aa). A Nuclear export signal (NES) motif is present at residues 233 to 238; sequence LTDLTL.

Interacts with XPO1; which mediates nuclear export. Interacts with TFDP1; modulates transactivation activity of TFDP1/E2F complexes. Polyubiquitinated, which promotes proteasomal degradation. As to expression, expressed in white and brown adipose tissue.

It is found in the nucleus. Its subcellular location is the cytoplasm. Its function is as follows. Acts at E2F-responsive promoters as coregulator to integrate signals provided by PHD- and/or bromodomain-containing transcription factors. May act as coactivator as well as corepressor of E2F1-TFDP1 and E2F4-TFDP1 complexes on E2F consensus binding sites, which would activate or inhibit E2F-target genes expression. Modulates fat storage by down-regulating the expression of key genes involved in adipocyte lipolysis, thermogenesis and oxidative metabolism. The polypeptide is SERTA domain-containing protein 2 (Sertad2) (Mus musculus (Mouse)).